Consider the following 368-residue polypeptide: Putative alcohol dehydrogenase D (368 aa).

Zn(2+) contacts are provided by Cys-40, His-61, Cys-91, Cys-94, Cys-97, Cys-105, and Cys-167.

Belongs to the zinc-containing alcohol dehydrogenase family. Zn(2+) serves as cofactor.

It catalyses the reaction a primary alcohol + NAD(+) = an aldehyde + NADH + H(+). The catalysed reaction is a secondary alcohol + NAD(+) = a ketone + NADH + H(+). Required for maintaining the appropriate mycolic acid composition and permeability of the envelope on its exposure to acidic pH. The chain is Putative alcohol dehydrogenase D (adhD) from Mycobacterium tuberculosis (strain CDC 1551 / Oshkosh).